Reading from the N-terminus, the 348-residue chain is Protein RecA (348 aa).

67-74 contributes to the ATP binding site; it reads GPESSGKT.

Belongs to the RecA family.

It localises to the cytoplasm. Functionally, can catalyze the hydrolysis of ATP in the presence of single-stranded DNA, the ATP-dependent uptake of single-stranded DNA by duplex DNA, and the ATP-dependent hybridization of homologous single-stranded DNAs. It interacts with LexA causing its activation and leading to its autocatalytic cleavage. This chain is Protein RecA, found in Clostridioides difficile (strain 630) (Peptoclostridium difficile).